The primary structure comprises 638 residues: ATP-dependent zinc metalloprotease FtsH (638 aa).

Residues 1-7 (MRSTYKT) lie on the Cytoplasmic side of the membrane. Residues 8 to 28 (IGLWVILIVLFVAFYNFFSQG) traverse the membrane as a helical segment. Residues 29-102 (NDQVQEPSFT…KYEREEQNSL (74 aa)) lie on the Periplasmic side of the membrane. Residues 103–123 (WLTILGQWMPVVFLFLFFIFF) form a helical membrane-spanning segment. The Cytoplasmic portion of the chain corresponds to 124–638 (MRQLQGGSGK…GLPAMEPKKA (515 aa)). An ATP-binding site is contributed by 195–202 (GSPGTGKT). Residue His417 participates in Zn(2+) binding. Glu418 is a catalytic residue. 2 residues coordinate Zn(2+): His421 and Asp493. Residues 596-638 (GGQLTRERPPPRVNAPPKATEKKDKRKILDALEGLPAMEPKKA) are disordered. The segment covering 614-625 (ATEKKDKRKILD) has biased composition (basic and acidic residues).

The protein in the central section; belongs to the AAA ATPase family. This sequence in the C-terminal section; belongs to the peptidase M41 family. As to quaternary structure, homohexamer. Zn(2+) is required as a cofactor.

The protein localises to the cell inner membrane. Acts as a processive, ATP-dependent zinc metallopeptidase for both cytoplasmic and membrane proteins. Plays a role in the quality control of integral membrane proteins. This chain is ATP-dependent zinc metalloprotease FtsH, found in Myxococcus xanthus (strain DK1622).